The primary structure comprises 1819 residues: MASSLAAQLSQIAAKSTNQLDLKAQRLSHSQSLIFDRKVAGTQDFDTVYQICFEGFQELCQLDARFNSFERTIFSEQSKTEDRTQLSAAQNKELDVVLEAFLALVGGRLLLSPAVKAVDWLIRRFRVHEYNTEFTILTFLPYYTTPLFLNLLSILPEDLTPTFKILIPYKKGLLNPPRHPLVHSATTNRAFLAAVNNYVLTVSRQQAHHHALLAFWAGIITEAVAGMLDSSRSGRREVEKQKHEDIILRILPILNDGFALKNVSELVIGCYMVSVVLAQKSSLQDKLLDGLMEAVAGSWTEETLESGLVCLAVLAQQKPETRLPRRALKAILRLDDIVKRLTDISSQYQTSNLLLGVVAGCVDDLTKHKDTARLELLPRVFQTQLLGELETSKAMAMVLHAASNAHRDGTMSLDTQACLADLVQEFNQSEFLQPIFQKTIAESTFDTAAIEHNLQTVIVTAPAPRAVEDVVMGDAEKVVEQDGFSSTLEALVGEKLFKSSFLSAQSIPVFDRLVQAFALAASSEEKTQVFSDLAVLGKSEVSKSPQYLSFFIRVFSGPYPIGTRAMALNIVATFLTSTSNLDLDFQAILPFLLVALADPSERIRREAAAALAAIGGIYKKHKKGENVWGRDTIYGQEKQSKSVQWLPTRDAQKVFERAVLPSLEECIFDPGHISKVLETTLRGASVDPNASELKKPLRLSFFTFLCSHAIQLPLFTPKLGLLGLLNRIDKAGGTTRTKELEPLLKAWRGLSEQEVSDICEKQRVPVSEVESQMVTIVTPKEKDALTLLLSNVSPYSESLRSTFVAAIFARVKDIWARVSEDRQVLAAEQLFDIALGLSDSALVNNCRNLLRSVELPGSVLIEFLEKIPVSLTDMEAVGPAPKRRRTSQSNMIAMTVKDEAEFGKVMEKMTFILELVDSSSPETHPELADGLFQTLAALHHFKSQIQSGMSYLLSLTLGSLLAIVNRSKESAKAQFDTSVIRADLVVDCVRTTESPQVQNAALLLVSGLSVIAPELVLHSVMPIFTFMGSSVLRKDDEYSVSVIDQTIDQVVPALIQSLRNQKRDVVSGTSELLLSFTAAFEHIPSHRRLRLFHALITKLGTQDFLFAVLAMLANRYAMDKDVLVLMTGLVSDASAPVELTVRRVHFYCGDSFLTKLQTYYKYLDLVTDSLKAKPSISQVLLGIGSDDGREPQKVAVDLLRDLAYLFKHSSLKVKMAKAFASEDEEVIGQIRALFSRILEQVLTIGDSVQSMKLVGQANSDVLGALFGTLTLVDFLDTIEVLLQRPSDELRRKVLRLLEGRLRQNPERDGASQIRVLDFLPTLVDIVRSSPDILLKHAAVACIDRIAEKYGKKDPSRVVSAAQVVASEACIGQEDDRIRIMGVLCLASMADVLGQAMIPALPEALSRSLALLEVSLEKGKENSRLHDATFSLFSALFVHIPYMISGPILDQILLLSFKSANAEDCEDDGRQEALRMMARKVDMAATLGAVDRNWQYAVQAGPAAAKETLEVVSLAIEKHPKSATGKNIGVLTSILFKVFDLRREQLALGSKATFEMADIEEIEESVNDVTIKMIYKLNDSTFRPIFTKLQDWAIAGLPKKDTQGSLARLTTFYKFLQVFFGTLQSIVTGYASYIIESVVSILGKASPSDKNTKSLWLATMRLLRSAFEHDQDEFWQSPSHLTQISKPLISQLAHATNSSTAALVIAEAVPTITELAIAADSTDNHKDLNTLLMRFLRPSSGPTGNRVAGGENPHTRLAALKAEQSLTEQLGEEWLALLPEMLPYISELMEDEDENVEREVRKWVKQIENVLGEKLDDMLT.

The stretch at 583–620 (LDFQAILPFLLVALADPSERIRREAAAALAAIGGIYKK) is one HEAT 1 repeat. 2 helical membrane passes run 945-965 (IQSGMSYLLSLTLGSLLAIVN) and 1001-1021 (ALLLVSGLSVIAPELVLHSVM). 4 HEAT repeats span residues 1045–1082 (QTIDQVVPALIQSLRNQKRDVVSGTSELLLSFTAAFEH), 1269–1306 (LTLVDFLDTIEVLLQRPSDELRRKVLRLLEGRLRQNPE), 1313–1351 (IRVLDFLPTLVDIVRSSPDILLKHAAVACIDRIAEKYGK), and 1775–1812 (ALLPEMLPYISELMEDEDENVEREVRKWVKQIENVLGE).

This sequence belongs to the HEATR1/UTP10 family. In terms of assembly, component of the ribosomal small subunit (SSU) processome.

The protein resides in the nucleus. It is found in the nucleolus. Its subcellular location is the membrane. Functionally, involved in nucleolar processing of pre-18S ribosomal RNA. Involved in ribosome biosynthesis. This is U3 small nucleolar RNA-associated protein 10 from Aspergillus clavatus (strain ATCC 1007 / CBS 513.65 / DSM 816 / NCTC 3887 / NRRL 1 / QM 1276 / 107).